The sequence spans 283 residues: Thymidylate synthase (283 aa).

A dUMP-binding site is contributed by arginine 22. Catalysis depends on cysteine 160, which acts as the Nucleophile. DUMP-binding positions include 180–183 (RSCD), asparagine 191, and 221–223 (HIY). Aspartate 183 is a binding site for (6R)-5,10-methylene-5,6,7,8-tetrahydrofolate. Serine 282 contacts (6R)-5,10-methylene-5,6,7,8-tetrahydrofolate.

Belongs to the thymidylate synthase family. Bacterial-type ThyA subfamily. Homodimer.

It localises to the cytoplasm. It carries out the reaction dUMP + (6R)-5,10-methylene-5,6,7,8-tetrahydrofolate = 7,8-dihydrofolate + dTMP. It functions in the pathway pyrimidine metabolism; dTTP biosynthesis. Its function is as follows. Catalyzes the reductive methylation of 2'-deoxyuridine-5'-monophosphate (dUMP) to 2'-deoxythymidine-5'-monophosphate (dTMP) while utilizing 5,10-methylenetetrahydrofolate (mTHF) as the methyl donor and reductant in the reaction, yielding dihydrofolate (DHF) as a by-product. This enzymatic reaction provides an intracellular de novo source of dTMP, an essential precursor for DNA biosynthesis. The sequence is that of Thymidylate synthase from Haemophilus influenzae (strain PittGG).